The following is a 282-amino-acid chain: Pantothenate synthetase (282 aa).

30–37 (MGFLHDGH) provides a ligand contact to ATP. Catalysis depends on His37, which acts as the Proton donor. Gln60 is a (R)-pantoate binding site. Gln60 serves as a coordination point for beta-alanine. 146 to 149 (GQKD) contributes to the ATP binding site. Position 152 (Gln152) interacts with (R)-pantoate. ATP is bound by residues Ile175 and 183–186 (KSSR).

This sequence belongs to the pantothenate synthetase family. As to quaternary structure, homodimer.

Its subcellular location is the cytoplasm. The catalysed reaction is (R)-pantoate + beta-alanine + ATP = (R)-pantothenate + AMP + diphosphate + H(+). The protein operates within cofactor biosynthesis; (R)-pantothenate biosynthesis; (R)-pantothenate from (R)-pantoate and beta-alanine: step 1/1. Functionally, catalyzes the condensation of pantoate with beta-alanine in an ATP-dependent reaction via a pantoyl-adenylate intermediate. This chain is Pantothenate synthetase, found in Campylobacter jejuni subsp. jejuni serotype O:6 (strain 81116 / NCTC 11828).